A 304-amino-acid polypeptide reads, in one-letter code: HPr kinase/phosphorylase (304 aa).

Residues His-136 and Lys-157 contribute to the active site. An ATP-binding site is contributed by 151–158; sequence GESGIGKS. Ser-158 is a binding site for Mg(2+). The active-site Proton acceptor; for phosphorylation activity. Proton donor; for dephosphorylation activity is Asp-175. Positions 198 to 207 are important for the catalytic mechanism of both phosphorylation and dephosphorylation; the sequence is LEVRGMGIID. Glu-199 is a Mg(2+) binding site. Arg-240 is an active-site residue. The interval 261 to 266 is important for the catalytic mechanism of dephosphorylation; that stretch reads PIRPGR.

This sequence belongs to the HPrK/P family. In terms of assembly, homohexamer. It depends on Mg(2+) as a cofactor.

The catalysed reaction is [HPr protein]-L-serine + ATP = [HPr protein]-O-phospho-L-serine + ADP + H(+). It carries out the reaction [HPr protein]-O-phospho-L-serine + phosphate + H(+) = [HPr protein]-L-serine + diphosphate. Functionally, catalyzes the ATP- as well as the pyrophosphate-dependent phosphorylation of a specific serine residue in HPr, a phosphocarrier protein of the phosphoenolpyruvate-dependent sugar phosphotransferase system (PTS). HprK/P also catalyzes the pyrophosphate-producing, inorganic phosphate-dependent dephosphorylation (phosphorolysis) of seryl-phosphorylated HPr (P-Ser-HPr). The two antagonistic activities of HprK/P are regulated by several intracellular metabolites, which change their concentration in response to the absence or presence of rapidly metabolisable carbon sources (glucose, fructose, etc.) in the growth medium. Therefore, by controlling the phosphorylation state of HPr, HPrK/P is a sensor enzyme that plays a major role in the regulation of carbon metabolism and sugar transport: it mediates carbon catabolite repression (CCR), and regulates PTS-catalyzed carbohydrate uptake and inducer exclusion. This Clostridium acetobutylicum (strain ATCC 824 / DSM 792 / JCM 1419 / IAM 19013 / LMG 5710 / NBRC 13948 / NRRL B-527 / VKM B-1787 / 2291 / W) protein is HPr kinase/phosphorylase.